The sequence spans 89 residues: Small ribosomal subunit protein uS15 (89 aa).

The segment covering 1–10 has biased composition (basic and acidic residues); the sequence is MSITAERKAE. Residues 1 to 24 form a disordered region; it reads MSITAERKAEVIQGNANKAGDTGS.

Belongs to the universal ribosomal protein uS15 family. As to quaternary structure, part of the 30S ribosomal subunit. Forms a bridge to the 50S subunit in the 70S ribosome, contacting the 23S rRNA.

In terms of biological role, one of the primary rRNA binding proteins, it binds directly to 16S rRNA where it helps nucleate assembly of the platform of the 30S subunit by binding and bridging several RNA helices of the 16S rRNA. Functionally, forms an intersubunit bridge (bridge B4) with the 23S rRNA of the 50S subunit in the ribosome. The chain is Small ribosomal subunit protein uS15 from Rhodopseudomonas palustris (strain BisB5).